The chain runs to 339 residues: Anthranilate phosphoribosyltransferase (339 aa).

5-phospho-alpha-D-ribose 1-diphosphate-binding positions include Gly-80, 83-84 (GD), Thr-88, 90-93 (NIST), 108-116 (KHGNRAMSS), and Ser-120. Gly-80 provides a ligand contact to anthranilate. Ser-92 contributes to the Mg(2+) binding site. Asn-111 is an anthranilate binding site. An anthranilate-binding site is contributed by Arg-166. Positions 225 and 226 each coordinate Mg(2+).

This sequence belongs to the anthranilate phosphoribosyltransferase family. Homodimer. It depends on Mg(2+) as a cofactor.

It carries out the reaction N-(5-phospho-beta-D-ribosyl)anthranilate + diphosphate = 5-phospho-alpha-D-ribose 1-diphosphate + anthranilate. It participates in amino-acid biosynthesis; L-tryptophan biosynthesis; L-tryptophan from chorismate: step 2/5. Functionally, catalyzes the transfer of the phosphoribosyl group of 5-phosphorylribose-1-pyrophosphate (PRPP) to anthranilate to yield N-(5'-phosphoribosyl)-anthranilate (PRA). The protein is Anthranilate phosphoribosyltransferase of Chloroflexus aurantiacus (strain ATCC 29366 / DSM 635 / J-10-fl).